Consider the following 94-residue polypeptide: Late cornified envelope protein 3C (94 aa).

Positions 1-10 are enriched in low complexity; the sequence is MSCQQNQQQC. Disordered regions lie at residues 1-35 and 65-94; these read MSCQ…PPSS and CRRQ…GGCC. Residues 11 to 34 show a composition bias toward pro residues; the sequence is QPPPSCPSPKCPPKSPAQCLPPPS. Gly residues predominate over residues 78 to 94; the sequence is GQQGGGSCRGHGSGGCC.

This sequence belongs to the LCE family. As to quaternary structure, interacts with CYSRT1; the interaction is direct. Skin-specific. Expression was readily detected in adult trunk skin, adult arm skin, fetal skin, penal skin, vulva, esophagus and tongue. Not expressed in the cervix, rectum, lung, colon, or placenta.

A structural component of the cornified envelope of the stratum corneum involved in innate cutaneous host defense. Possesses defensin-like antimicrobial activity against a broad spectrum of Gram-positive and Gram-negative bacteria, both aerobic and anaerobic species. Upon inflammation, may regulate skin barrier repair by shaping cutaneous microbiota composition and immune response to bacterial antigens. The protein is Late cornified envelope protein 3C of Homo sapiens (Human).